The following is an 85-amino-acid chain: Large ribosomal subunit protein bL27 (85 aa).

The segment at 1 to 20 (MAHKKAGGSTRNGRDSEAKR) is disordered.

The protein belongs to the bacterial ribosomal protein bL27 family.

The chain is Large ribosomal subunit protein bL27 from Serratia proteamaculans (strain 568).